Consider the following 357-residue polypeptide: GDP-mannose transporter 2 (357 aa).

Topologically, residues 1-33 (MASARNGVSKDELLPVYERRSQRDGDISGSVKS) are cytoplasmic. The chain crosses the membrane as a helical span at residues 34-54 (FASTIGNSASAAVLAYCLSSI). At 55-68 (SMTLVNKYVVSGAS) the chain is on the lumenal side. The chain crosses the membrane as a helical span at residues 69–89 (WNLSFLYLAMQSFIGTVAILA). Residues 90-107 (CKKTGLIQNLALFDLKKA) are Cytoplasmic-facing. The helical transmembrane segment at 108–128 (QTWLPISLLLVGMIYTGNKAL) threads the bilayer. A topological domain (lumenal) is located at residue Gln-129. Residues 130 to 150 (FLSVPVYTIFKNLTIIVIAYG) traverse the membrane as a helical segment. At 151 to 161 (EVLMVGGGVKP) the chain is on the cytoplasmic side. The helical transmembrane segment at 162–181 (LALLSFGLMVLSSVVAAWAD) threads the bilayer. At 182-196 (IQNATTATVGASSDS) the chain is on the lumenal side. N-linked (GlcNAc...) asparagine glycosylation is present at Asn-184. The helical transmembrane segment at 197 to 217 (TAAALSALNAGYAWMGTNVIF) threads the bilayer. The Cytoplasmic portion of the chain corresponds to 218-236 (SASYALGMRRVIKKTNFDN). Residues 237-257 (WDVMFYNNLLSIPILLLASVL) form a helical membrane-spanning segment. Over 258 to 277 (AEDWSSENLQRNFPAELRQS) the chain is Lumenal. Residues 278-298 (LFIGILYSGVAAVFISYCTAW) form a helical membrane-spanning segment. Topologically, residues 299–306 (CVRATSST) are cytoplasmic. Residues 307 to 327 (TYAMVGALNKLPLAVAGIVFF) traverse the membrane as a helical segment. Over 328–332 (AAPVT) the chain is Lumenal. The chain crosses the membrane as a helical span at residues 333–352 (FGSVSAIVLGFISGLVYARA). Residues 353–357 (KSTGA) are Cytoplasmic-facing.

This sequence belongs to the TPT transporter family. SLC35D subfamily. Homooligomer.

It localises to the golgi apparatus membrane. It is found in the cytoplasmic vesicle membrane. The protein resides in the endoplasmic reticulum membrane. Involved in the import of GDP-mannose from the cytoplasm into the Golgi lumen. The protein is GDP-mannose transporter 2 (gmt2) of Neosartorya fischeri (strain ATCC 1020 / DSM 3700 / CBS 544.65 / FGSC A1164 / JCM 1740 / NRRL 181 / WB 181) (Aspergillus fischerianus).